A 110-amino-acid chain; its full sequence is Small ribosomal subunit protein eS25 (110 aa).

Positions 1-38 (MGGKKKPTLSQLAKKAEKEKAQQAQKAKKEVKKEETPA) are disordered. Residues 14–38 (KKAEKEKAQQAQKAKKEVKKEETPA) show a composition bias toward basic and acidic residues.

The protein belongs to the eukaryotic ribosomal protein eS25 family.

The polypeptide is Small ribosomal subunit protein eS25 (rps25e) (Pyrobaculum aerophilum (strain ATCC 51768 / DSM 7523 / JCM 9630 / CIP 104966 / NBRC 100827 / IM2)).